A 77-amino-acid polypeptide reads, in one-letter code: Metallothionein-like protein type 2 (77 aa).

Belongs to the metallothionein superfamily. Type 15 family. As to expression, expressed in the left, stem and flower, at very low levels in roots and is not detectable in mesophyll protoplasts.

Metallothioneins have a high content of cysteine residues that bind various heavy metals. In Vicia faba (Broad bean), this protein is Metallothionein-like protein type 2 (MTI).